The following is a 267-amino-acid chain: Tryptophan synthase alpha chain (267 aa).

Catalysis depends on proton acceptor residues E49 and D60.

The protein belongs to the TrpA family. As to quaternary structure, tetramer of two alpha and two beta chains.

The catalysed reaction is (1S,2R)-1-C-(indol-3-yl)glycerol 3-phosphate + L-serine = D-glyceraldehyde 3-phosphate + L-tryptophan + H2O. It functions in the pathway amino-acid biosynthesis; L-tryptophan biosynthesis; L-tryptophan from chorismate: step 5/5. Functionally, the alpha subunit is responsible for the aldol cleavage of indoleglycerol phosphate to indole and glyceraldehyde 3-phosphate. This chain is Tryptophan synthase alpha chain, found in Geotalea uraniireducens (strain Rf4) (Geobacter uraniireducens).